The primary structure comprises 192 residues: dITP/XTP pyrophosphatase (192 aa).

7 to 12 (SNNKNK) contributes to the substrate binding site. Residue D68 is the Proton acceptor of the active site. Mg(2+) is bound at residue D68. Substrate contacts are provided by residues T69, 148-151 (FGYD), K171, and 176-177 (HR).

The protein belongs to the HAM1 NTPase family. Homodimer. Requires Mg(2+) as cofactor.

It carries out the reaction XTP + H2O = XMP + diphosphate + H(+). The catalysed reaction is dITP + H2O = dIMP + diphosphate + H(+). The enzyme catalyses ITP + H2O = IMP + diphosphate + H(+). Functionally, pyrophosphatase that catalyzes the hydrolysis of nucleoside triphosphates to their monophosphate derivatives, with a high preference for the non-canonical purine nucleotides XTP (xanthosine triphosphate), dITP (deoxyinosine triphosphate) and ITP. Seems to function as a house-cleaning enzyme that removes non-canonical purine nucleotides from the nucleotide pool, thus preventing their incorporation into DNA/RNA and avoiding chromosomal lesions. The protein is dITP/XTP pyrophosphatase of Flavobacterium johnsoniae (strain ATCC 17061 / DSM 2064 / JCM 8514 / BCRC 14874 / CCUG 350202 / NBRC 14942 / NCIMB 11054 / UW101) (Cytophaga johnsonae).